The primary structure comprises 346 residues: Probable RNA methyltransferase PSPA7_3453 (346 aa).

Glutamate 91 acts as the Proton acceptor in catalysis. In terms of domain architecture, Radical SAM core spans 94–320 (LLPRGGLCVS…TKVRNSAGQD (227 aa)). Cysteine 101 and cysteine 325 are oxidised to a cystine. 3 residues coordinate [4Fe-4S] cluster: cysteine 108, cysteine 112, and cysteine 115. Residues 153 to 154 (GE), serine 183, 206 to 208 (SLH), and asparagine 282 each bind S-adenosyl-L-methionine. Cysteine 325 acts as the S-methylcysteine intermediate in catalysis.

The protein belongs to the radical SAM superfamily. RlmN family. The cofactor is [4Fe-4S] cluster.

The protein resides in the cytoplasm. This Pseudomonas paraeruginosa (strain DSM 24068 / PA7) (Pseudomonas aeruginosa (strain PA7)) protein is Probable RNA methyltransferase PSPA7_3453.